We begin with the raw amino-acid sequence, 84 residues long: Large ribosomal subunit protein bL31B (84 aa).

This sequence belongs to the bacterial ribosomal protein bL31 family. Type B subfamily. Part of the 50S ribosomal subunit.

This Staphylococcus aureus (strain Mu3 / ATCC 700698) protein is Large ribosomal subunit protein bL31B.